The sequence spans 83 residues: Transmembrane protein EP84R (83 aa).

The next 2 membrane-spanning stretches (helical) occupy residues 31 to 51 (IIGV…IIIL) and 59 to 79 (AGSI…FLIY).

Belongs to the asfivirus EP84R family.

It is found in the virion membrane. This is Transmembrane protein EP84R from Ornithodoros (relapsing fever ticks).